A 287-amino-acid chain; its full sequence is Pantothenate synthetase (287 aa).

30–37 (MGYLHEGH) contributes to the ATP binding site. His-37 functions as the Proton donor in the catalytic mechanism. Gln-61 contacts (R)-pantoate. Gln-61 is a binding site for beta-alanine. ATP is bound at residue 150–153 (GMKD). (R)-pantoate is bound at residue Gln-156. Residues Val-179 and 187-190 (LSSR) each bind ATP.

This sequence belongs to the pantothenate synthetase family. Homodimer.

The protein localises to the cytoplasm. It carries out the reaction (R)-pantoate + beta-alanine + ATP = (R)-pantothenate + AMP + diphosphate + H(+). The protein operates within cofactor biosynthesis; (R)-pantothenate biosynthesis; (R)-pantothenate from (R)-pantoate and beta-alanine: step 1/1. Catalyzes the condensation of pantoate with beta-alanine in an ATP-dependent reaction via a pantoyl-adenylate intermediate. In Coprothermobacter proteolyticus (strain ATCC 35245 / DSM 5265 / OCM 4 / BT), this protein is Pantothenate synthetase.